A 482-amino-acid polypeptide reads, in one-letter code: tRNA sulfurtransferase (482 aa).

Positions Leu61–Arg165 constitute a THUMP domain. ATP contacts are provided by residues Leu183 to Ile184, Lys265, Gly287, and Gln296. An intrachain disulfide couples Cys344 to Cys456. Positions Phe404 to Pro482 constitute a Rhodanese domain. Cys456 acts as the Cysteine persulfide intermediate in catalysis.

Belongs to the ThiI family.

It localises to the cytoplasm. It carries out the reaction [ThiI sulfur-carrier protein]-S-sulfanyl-L-cysteine + a uridine in tRNA + 2 reduced [2Fe-2S]-[ferredoxin] + ATP + H(+) = [ThiI sulfur-carrier protein]-L-cysteine + a 4-thiouridine in tRNA + 2 oxidized [2Fe-2S]-[ferredoxin] + AMP + diphosphate. It catalyses the reaction [ThiS sulfur-carrier protein]-C-terminal Gly-Gly-AMP + S-sulfanyl-L-cysteinyl-[cysteine desulfurase] + AH2 = [ThiS sulfur-carrier protein]-C-terminal-Gly-aminoethanethioate + L-cysteinyl-[cysteine desulfurase] + A + AMP + 2 H(+). It functions in the pathway cofactor biosynthesis; thiamine diphosphate biosynthesis. In terms of biological role, catalyzes the ATP-dependent transfer of a sulfur to tRNA to produce 4-thiouridine in position 8 of tRNAs, which functions as a near-UV photosensor. Also catalyzes the transfer of sulfur to the sulfur carrier protein ThiS, forming ThiS-thiocarboxylate. This is a step in the synthesis of thiazole, in the thiamine biosynthesis pathway. The sulfur is donated as persulfide by IscS. The chain is tRNA sulfurtransferase from Escherichia coli O139:H28 (strain E24377A / ETEC).